A 467-amino-acid polypeptide reads, in one-letter code: Polygalacturonase (467 aa).

The N-terminal stretch at 1-27 (MALQRRFFQFVIITLLIPSFILGYTSA) is a signal peptide. Catalysis depends on Asp-283, which acts as the Proton donor. Residue Asn-290 is glycosylated (N-linked (GlcNAc...) asparagine). His-306 is an active-site residue.

This sequence belongs to the glycosyl hydrolase 28 family.

It localises to the secreted. It is found in the cell wall. The enzyme catalyses (1,4-alpha-D-galacturonosyl)n+m + H2O = (1,4-alpha-D-galacturonosyl)n + (1,4-alpha-D-galacturonosyl)m.. Its function is as follows. Acts in concert with the pectinesterase, in the ripening process. Is involved in cell wall metabolism, specifically in polyuronide degradation. In Actinidia deliciosa (Kiwi), this protein is Polygalacturonase.